Consider the following 906-residue polypeptide: Serine-aspartate repeat-containing protein C (906 aa).

The first 50 residues, 1-50, serve as a signal peptide directing secretion; the sequence is MNNKKTATNRKGMIPNRLNKFSIRKYSVGTASILVGTTLIFGLSGHEAKA. The interval 51 to 127 is disordered; the sequence is AEHTNGELNQ…QPTKKNNDAT (77 aa). The segment at 51–486 is ligand binding A region; sequence AEHTNGELNQ…GSSTANGDQK (436 aa). Polar residues-rich tracts occupy residues 56-71 and 80-119; these read GELN…PSEN and RQQN…STQP. 2 CNA-B domains span residues 487-597 and 598-708; these read KYNL…YKTP and KYSL…EEET. The disordered stretch occupies residues 669 to 881; it reads KQTGTNTTED…TGSENNGSNN (213 aa). 2 stretches are compositionally biased toward acidic residues: residues 676-686 and 703-845; these read TEDDKDADGGE and YFEE…DSDS. The short motif at 869-873 is the LPXTG sorting signal element; the sequence is LPETG. A Pentaglycyl murein peptidoglycan amidated threonine modification is found at Thr872. The propeptide at 873 to 906 is removed by sortase; it reads GSENNGSNNATLFGGLFAALGSLLLFGRRKKQNK.

Belongs to the serine-aspartate repeat-containing protein (SDr) family. Homodimerizes; via N2-Domain. Interacts with host NRXN1; this interaction mediates bacterial attachment to host cells.

Its subcellular location is the secreted. It localises to the cell wall. Its function is as follows. Cell surface-associated calcium-binding protein which plays an important role in adhesion and pathogenesis. Mediates interactions with components of the extracellular matrix such as host NRXN1 to promote bacterial adhesion. The chain is Serine-aspartate repeat-containing protein C (sdrC) from Staphylococcus aureus (strain MRSA252).